We begin with the raw amino-acid sequence, 203 residues long: MNNLKQGKFITFEGGEGIGKSTQSQMLYEYLQSQNTPVILTREVGGTIVAEKMREILVHEELLPMSELFQAMAARYDHMARKIIPALQEGHIVICDRFIDSTVCYQGLELENGIDLVYNLHKTLMPSLMPDITFFIDVEPDTAIKRVNSRNMNNKFDIRGIDFYKKIYYCFKELSNRFPERIKTIKASDLSPLEVHELIKKHL.

An ATP-binding site is contributed by 14 to 21 (GGEGIGKS).

It belongs to the thymidylate kinase family.

The enzyme catalyses dTMP + ATP = dTDP + ADP. Phosphorylation of dTMP to form dTDP in both de novo and salvage pathways of dTTP synthesis. The polypeptide is Thymidylate kinase (Rickettsia rickettsii (strain Iowa)).